The following is a 285-amino-acid chain: Single myb histone 3 (285 aa).

Residues 1 to 35 (MGAPKQKWTSEEEDALRRGVRKHGAGKWRTIQKDP) are disordered. The HTH myb-type domain maps to 1 to 60 (MGAPKQKWTSEEEDALRRGVRKHGAGKWRTIQKDPQFSPILSSRSNIDLKDKWRNLSFSA). The segment at residues 28 to 56 (WRTIQKDPQFSPILSSRSNIDLKDKWRNL) is a DNA-binding region (H-T-H motif). An H15 domain is found at 113–181 (TPPKYGAMIM…KVDNFYRLPD (69 aa)). Residues 226 to 255 (VKVTDAEAKAHDAHDQMMEAERMLKMAEDT) adopt a coiled-coil conformation.

This sequence belongs to the histone H1/H5 family. SMH subfamily. Forms a homodimer and heterodimers.

The protein localises to the nucleus. It localises to the chromosome. It is found in the nucleolus. The protein resides in the telomere. Functionally, binds preferentially double-stranded telomeric repeats, but may also bind to the single telomeric strand. The polypeptide is Single myb histone 3 (SMH3) (Zea mays (Maize)).